The chain runs to 138 residues: Large ribosomal subunit protein uL29 (138 aa).

The segment at 1–79 (MAKSKMLDLR…TNKVIKADYN (79 aa)) is large ribosomal subunit protein uL29. The segment at 80–138 (KAVEEAEKAGKEVRAKQRKFLEEQYGQQSQTKVNEADIQKAMQAAEQETVEPDTKGETK) is unknown. The interval 103–138 (QYGQQSQTKVNEADIQKAMQAAEQETVEPDTKGETK) is disordered.

This sequence belongs to the universal ribosomal protein uL29 family.

The polypeptide is Large ribosomal subunit protein uL29 (Mycoplasma capricolum subsp. capricolum (strain California kid / ATCC 27343 / NCTC 10154)).